Consider the following 511-residue polypeptide: BAR/IMD domain-containing adapter protein 2-like 1 (511 aa).

Residues Met1–Pro249 form the IMD domain. Residues Met115–Leu154 are a coiled coil. Phosphothreonine is present on residues Thr248 and Thr257. Phosphoserine is present on residues Ser261 and Ser281. A disordered region spans residues Asn302–Arg328. The segment covering Asn303 to Arg328 has biased composition (polar residues). Residues Ser331 and Ser354 each carry the phosphoserine modification. An SH3 domain is found at Met339–Glu402. Position 412 is a phosphothreonine (Thr412). A phosphoserine mark is found at Ser414, Ser420, and Ser422. Positions Arg451–Arg511 are disordered. The tract at residues Pro483–Arg511 is binds F-actin.

In terms of assembly, interacts with RAC1. Binds to F-actin. Interacts with FASLG. Interacts (via SH3 domain) with E.coli effector protein EspF(U) (via PXXP motifs). Identified in a complex containing at least WASL, BAIAP2L1 and E.coli EspF(U). Interacts with E.coli intimin receptor Tir. In terms of processing, phosphorylated on tyrosine in response to insulin.

The protein localises to the cytoplasm. It localises to the cytoskeleton. May function as adapter protein. Involved in the formation of clusters of actin bundles. Plays a role in the reorganization of the actin cytoskeleton in response to bacterial infection. The polypeptide is BAR/IMD domain-containing adapter protein 2-like 1 (BAIAP2L1) (Homo sapiens (Human)).